The following is a 24-amino-acid chain: 33.0 kDa cold shock protein (24 aa).

Belongs to the thaumatin family. Homooligomer; disulfide-linked. Post-translationally, glycosylated.

The protein localises to the secreted. It is found in the extracellular space. Its subcellular location is the apoplast. This chain is 33.0 kDa cold shock protein, found in Arachis hypogaea (Peanut).